The chain runs to 426 residues: Gamma-glutamyl phosphate reductase (426 aa).

Belongs to the gamma-glutamyl phosphate reductase family.

Its subcellular location is the cytoplasm. The catalysed reaction is L-glutamate 5-semialdehyde + phosphate + NADP(+) = L-glutamyl 5-phosphate + NADPH + H(+). It functions in the pathway amino-acid biosynthesis; L-proline biosynthesis; L-glutamate 5-semialdehyde from L-glutamate: step 2/2. In terms of biological role, catalyzes the NADPH-dependent reduction of L-glutamate 5-phosphate into L-glutamate 5-semialdehyde and phosphate. The product spontaneously undergoes cyclization to form 1-pyrroline-5-carboxylate. The sequence is that of Gamma-glutamyl phosphate reductase from Acidovorax ebreus (strain TPSY) (Diaphorobacter sp. (strain TPSY)).